The chain runs to 804 residues: DNA gyrase subunit B (804 aa).

The Toprim domain maps to Cys431 to Pro546. Glu437, Asp511, and Asp513 together coordinate Mg(2+).

The protein belongs to the type II topoisomerase GyrB family. As to quaternary structure, heterotetramer, composed of two GyrA and two GyrB chains. In the heterotetramer, GyrA contains the active site tyrosine that forms a transient covalent intermediate with DNA, while GyrB binds cofactors and catalyzes ATP hydrolysis. Mg(2+) serves as cofactor. Mn(2+) is required as a cofactor. It depends on Ca(2+) as a cofactor.

It localises to the cytoplasm. It carries out the reaction ATP-dependent breakage, passage and rejoining of double-stranded DNA.. Functionally, a type II topoisomerase that negatively supercoils closed circular double-stranded (ds) DNA in an ATP-dependent manner to modulate DNA topology and maintain chromosomes in an underwound state. Negative supercoiling favors strand separation, and DNA replication, transcription, recombination and repair, all of which involve strand separation. Also able to catalyze the interconversion of other topological isomers of dsDNA rings, including catenanes and knotted rings. Type II topoisomerases break and join 2 DNA strands simultaneously in an ATP-dependent manner. The polypeptide is DNA gyrase subunit B (Chlamydia muridarum (strain MoPn / Nigg)).